A 228-amino-acid polypeptide reads, in one-letter code: 2,3-bisphosphoglycerate-dependent phosphoglycerate mutase (228 aa).

Substrate is bound by residues 8–15 (RHGQSEWN), 21–22 (TG), Arg-60, 87–90 (ERHY), Lys-98, 114–115 (RR), and 180–181 (GN). His-9 serves as the catalytic Tele-phosphohistidine intermediate. The Proton donor/acceptor role is filled by Glu-87.

It belongs to the phosphoglycerate mutase family. BPG-dependent PGAM subfamily. As to quaternary structure, homodimer.

The enzyme catalyses (2R)-2-phosphoglycerate = (2R)-3-phosphoglycerate. It functions in the pathway carbohydrate degradation; glycolysis; pyruvate from D-glyceraldehyde 3-phosphate: step 3/5. Its function is as follows. Catalyzes the interconversion of 2-phosphoglycerate and 3-phosphoglycerate. This chain is 2,3-bisphosphoglycerate-dependent phosphoglycerate mutase, found in Zymomonas mobilis subsp. mobilis (strain ATCC 31821 / ZM4 / CP4).